The primary structure comprises 607 residues: Elongation factor 4 (607 aa).

One can recognise a tr-type G domain in the interval 11–193 (EKIRNFSIIA…QIVEKVPAPT (183 aa)). Residues 23 to 28 (DHGKST) and 140 to 143 (NKID) each bind GTP.

Belongs to the TRAFAC class translation factor GTPase superfamily. Classic translation factor GTPase family. LepA subfamily.

It is found in the cell membrane. It catalyses the reaction GTP + H2O = GDP + phosphate + H(+). Its function is as follows. Required for accurate and efficient protein synthesis under certain stress conditions. May act as a fidelity factor of the translation reaction, by catalyzing a one-codon backward translocation of tRNAs on improperly translocated ribosomes. Back-translocation proceeds from a post-translocation (POST) complex to a pre-translocation (PRE) complex, thus giving elongation factor G a second chance to translocate the tRNAs correctly. Binds to ribosomes in a GTP-dependent manner. In Streptococcus pneumoniae serotype 19F (strain G54), this protein is Elongation factor 4.